Here is a 133-residue protein sequence, read N- to C-terminus: Profilin (133 aa).

This sequence belongs to the profilin family.

Functionally, more likely to influence phosphoinositide metabolism than actin assembly. This chain is Profilin, found in Vaccinia virus (strain Tian Tan) (VACV).